The following is a 161-amino-acid chain: MTALRIGNGYDIHRLVGDRPLILGGVTIAHHLGLDGHSDADVLTHALMDALLGALSLGDIGHYFPPSDARWQGADSLKLLAQVHQLILERGWRINNLDNVIVAEQPKLKPHIQAMKENLAKVLTIDPDLIGIKATTNERLGPTGREEGIAAYSVALLIKEG.

The a divalent metal cation site is built by Asp-11 and His-13. 4-CDP-2-C-methyl-D-erythritol 2-phosphate is bound by residues 11-13 (DIH) and 37-38 (HS). His-45 serves as a coordination point for a divalent metal cation. Residues 59 to 61 (DIG), 135 to 138 (TTNE), and Arg-145 each bind 4-CDP-2-C-methyl-D-erythritol 2-phosphate.

Belongs to the IspF family. Homotrimer. Requires a divalent metal cation as cofactor.

The enzyme catalyses 4-CDP-2-C-methyl-D-erythritol 2-phosphate = 2-C-methyl-D-erythritol 2,4-cyclic diphosphate + CMP. Its pathway is isoprenoid biosynthesis; isopentenyl diphosphate biosynthesis via DXP pathway; isopentenyl diphosphate from 1-deoxy-D-xylulose 5-phosphate: step 4/6. In terms of biological role, involved in the biosynthesis of isopentenyl diphosphate (IPP) and dimethylallyl diphosphate (DMAPP), two major building blocks of isoprenoid compounds. Catalyzes the conversion of 4-diphosphocytidyl-2-C-methyl-D-erythritol 2-phosphate (CDP-ME2P) to 2-C-methyl-D-erythritol 2,4-cyclodiphosphate (ME-CPP) with a corresponding release of cytidine 5-monophosphate (CMP). In Synechocystis sp. (strain ATCC 27184 / PCC 6803 / Kazusa), this protein is 2-C-methyl-D-erythritol 2,4-cyclodiphosphate synthase.